Consider the following 161-residue polypeptide: Cyclic pyranopterin monophosphate synthase (161 aa).

Residues 78–80 and 116–117 contribute to the substrate site; these read MCH and ME. Residue D131 is part of the active site.

Belongs to the MoaC family. In terms of assembly, homohexamer; trimer of dimers.

It catalyses the reaction (8S)-3',8-cyclo-7,8-dihydroguanosine 5'-triphosphate = cyclic pyranopterin phosphate + diphosphate. Its pathway is cofactor biosynthesis; molybdopterin biosynthesis. Functionally, catalyzes the conversion of (8S)-3',8-cyclo-7,8-dihydroguanosine 5'-triphosphate to cyclic pyranopterin monophosphate (cPMP). The polypeptide is Cyclic pyranopterin monophosphate synthase (Nitratidesulfovibrio vulgaris (strain ATCC 29579 / DSM 644 / CCUG 34227 / NCIMB 8303 / VKM B-1760 / Hildenborough) (Desulfovibrio vulgaris)).